Here is a 621-residue protein sequence, read N- to C-terminus: DEAD-box ATP-dependent RNA helicase 39 (621 aa).

The Q motif signature appears at 112–140 (ENFQELGLSEEVMGALQELNIEVPTEIQC). The Helicase ATP-binding domain occupies 143–330 (IPAVMERKSV…DEEFQGIEHL (188 aa)). 156–163 (SHTGSGKT) lines the ATP pocket. The DEAD box motif lies at 270–273 (DEAD). In terms of domain architecture, Helicase C-terminal spans 355-505 (KLEALLQVLE…LESLTTDNVR (151 aa)). The disordered stretch occupies residues 497 to 621 (ESLTTDNVRR…RGKSSSARAS (125 aa)). Over residues 503–537 (NVRRDAARTHITQEKGRSVKQIREVSKQRNSRDKP) the composition is skewed to basic and acidic residues. Low complexity predominate over residues 555–572 (KSSSSSFSKPRKASSPPE).

The protein belongs to the DEAD box helicase family.

The catalysed reaction is ATP + H2O = ADP + phosphate + H(+). This Arabidopsis thaliana (Mouse-ear cress) protein is DEAD-box ATP-dependent RNA helicase 39 (RH39).